The chain runs to 653 residues: uncharacterized protein (653 aa).

The next 2 membrane-spanning stretches (helical) occupy residues 39–59 and 207–227; these read AMTTLMVSLLMSSLPSGLKLI and AVFVSIWLMVILGAAFNAFTI. One can recognise an HAMP domain in the interval 225–277; it reads FTITKPIRELLTGVKNIASGDFHQRISLPFGGELGALIFNFNEMAERLEKYEQ. Residues 286–356 enclose the PAS domain; it reads EKAKLETLVS…PALNDIVRKN (71 aa). The 231-residue stretch at 421–651 folds into the Histidine kinase domain; sequence NVSHELRTPL…CFFFDLIIAK (231 aa). At H424 the chain carries Phosphohistidine; by autocatalysis.

Its subcellular location is the plastid. The protein resides in the chloroplast membrane. The catalysed reaction is ATP + protein L-histidine = ADP + protein N-phospho-L-histidine.. This is an uncharacterized protein from Pyropia yezoensis (Susabi-nori).